Here is a 682-residue protein sequence, read N- to C-terminus: Zinc finger protein 16 (682 aa).

Composition is skewed to basic and acidic residues over residues M1–E10 and V113–R125. Disordered stretches follow at residues M1–D33 and D112–G134. Positions Y62 to I210 are necessary for transcription activation. The C2H2-type 1; degenerate zinc-finger motif lies at L209–H231. A C2H2-type 2; degenerate zinc finger spans residues F237–H259. K253 participates in a covalent cross-link: Glycyl lysine isopeptide (Lys-Gly) (interchain with G-Cter in SUMO2). 8 consecutive C2H2-type zinc fingers follow at residues Y265–H287, Y293–H315, Y321–H343, Y349–H371, F377–H399, Y405–H427, Y433–H455, and H461–H483. 2 required for nuclear localization regions span residues S268–R393 and R341–G373. Residues S473 to A503 are required for nuclear localization. Position 487 is an N6-acetyllysine (K487). C2H2-type zinc fingers lie at residues Y489–H511, Y517–H539, Y545–H567, H573–H595, Y601–H623, Y629–H651, and Y657–H679.

Belongs to the krueppel C2H2-type zinc-finger protein family. In terms of assembly, interacts with INCA1; the interaction inhibits INCA1 activity and induces the cell cycle process.

It is found in the nucleus. Functionally, acts as a transcriptional activator. Promotes cell proliferation by facilitating the cell cycle phase transition from the S to G2/M phase. Involved in both the hemin- and phorbol myristate acetate (PMA)-induced erythroid and megakaryocytic differentiation, respectively. Also plays a role as an inhibitor of cell apoptosis. This Gorilla gorilla gorilla (Western lowland gorilla) protein is Zinc finger protein 16 (ZNF16).